A 174-amino-acid polypeptide reads, in one-letter code: Crossover junction endodeoxyribonuclease RuvC (174 aa).

Catalysis depends on residues Asp16, Glu76, and Asp148. Mg(2+) contacts are provided by Asp16, Glu76, and Asp148.

It belongs to the RuvC family. Homodimer which binds Holliday junction (HJ) DNA. The HJ becomes 2-fold symmetrical on binding to RuvC with unstacked arms; it has a different conformation from HJ DNA in complex with RuvA. In the full resolvosome a probable DNA-RuvA(4)-RuvB(12)-RuvC(2) complex forms which resolves the HJ. Requires Mg(2+) as cofactor.

The protein resides in the cytoplasm. It catalyses the reaction Endonucleolytic cleavage at a junction such as a reciprocal single-stranded crossover between two homologous DNA duplexes (Holliday junction).. Functionally, the RuvA-RuvB-RuvC complex processes Holliday junction (HJ) DNA during genetic recombination and DNA repair. Endonuclease that resolves HJ intermediates. Cleaves cruciform DNA by making single-stranded nicks across the HJ at symmetrical positions within the homologous arms, yielding a 5'-phosphate and a 3'-hydroxyl group; requires a central core of homology in the junction. The consensus cleavage sequence is 5'-(A/T)TT(C/G)-3'. Cleavage occurs on the 3'-side of the TT dinucleotide at the point of strand exchange. HJ branch migration catalyzed by RuvA-RuvB allows RuvC to scan DNA until it finds its consensus sequence, where it cleaves and resolves the cruciform DNA. The sequence is that of Crossover junction endodeoxyribonuclease RuvC from Rhodopseudomonas palustris (strain BisA53).